The following is a 115-amino-acid chain: MTRIKRGYIARKRRKKILAFASGFRGAHSKLFRTADQQKIRALVSAHRDRSKRKRDLRRLWITRINAAARNNGVSYNKFIRYLYKRQLLSNRRILAQIAVLDKNCFSTIINNIIE.

This sequence belongs to the bacterial ribosomal protein bL20 family.

Its subcellular location is the plastid. The protein localises to the chloroplast. Its function is as follows. Binds directly to 23S ribosomal RNA and is necessary for the in vitro assembly process of the 50S ribosomal subunit. It is not involved in the protein synthesizing functions of that subunit. The sequence is that of Large ribosomal subunit protein bL20c from Cycas taitungensis (Prince sago).